An 885-amino-acid chain; its full sequence is Insulin receptor substrate 1-A (885 aa).

One can recognise an IRS-type PTB domain in the interval 1-56 (MNIRRCGHSENFFFIEVGRSAVTGAGEFWMQVDDSVVAQNMHETILEAMKALSDEF). Residues 56-225 (FRPRSKSQSS…GGFISSDEYG (170 aa)) are disordered. 4 stretches are compositionally biased toward low complexity: residues 61-75 (KSQSSSNCSNPISVP), 99-109 (SATATSPAGGA), 176-197 (SPSATSPVSLSSSSTSGHGSTS), and 205-217 (SSASISGSPSDGG). S104 is modified (phosphoserine). A Phosphotyrosine; by INSR modification is found at Y257. The YXXM motif 1 signature appears at 257-260 (YICM). 2 stretches are compositionally biased toward polar residues: residues 263-276 (SSSHLQRGPQQRYQ) and 296-313 (SSGTSPPTVSHQKTPSQS). Disordered stretches follow at residues 263–282 (SSSHLQRGPQQRYQPSRGEE) and 293–313 (RTHSSGTSPPTVSHQKTPSQS). 5 consecutive short sequence motifs (YXXM motif) follow at residues 318–321 (YTEM), 364–367 (YMPM), 381–384 (YMPM), 409–412 (YMMM), and 451–454 (YINM). Phosphotyrosine; by INSR is present on residues Y364 and Y381. Phosphotyrosine is present on Y409. The interval 501-581 (NLRISANSGH…LPPEPKSPGE (81 aa)) is disordered. Polar residues predominate over residues 504–515 (ISANSGHNLYTE). Low complexity predominate over residues 516 to 526 (DSSSSSTSSDS). Phosphotyrosine; by INSR occurs at positions 582 and 620. The segment at 582-584 (YVN) is GRB2-binding. A YXXM motif 7 motif is present at residues 620–623 (YMNM). Residues 637–660 (TSSYEPPNKPVNSVCPTETCSSSR) show a composition bias toward polar residues. Residues 637–665 (TSSYEPPNKPVNSVCPTETCSSSRPPIRG) are disordered. The residue at position 672 (Y672) is a Phosphotyrosine; by INSR. Short sequence motifs (YXXM motif) lie at residues 672 to 675 (YMSM) and 706 to 709 (YAEM). Positions 732–803 (ASRSSLLGQG…SGEDVKRHSS (72 aa)) are disordered. 2 stretches are compositionally biased toward polar residues: residues 743–758 (GPSAFTRVSLSPNRNP) and 777–792 (ETFSSTPTTARVTTGP). Residues Y834 and Y866 each carry the phosphotyrosine; by INSR modification.

In terms of assembly, interacts with the NPXY motif of tyrosine-phosphorylated igf1r and insr via the PTB domain. Binds to phosphatidylinositol 3-kinase p85 subunit at a low level in vitro prior to phosphorylation. Binding is greatly enhanced following tyrosine phosphorylation by insr and probably occurs via the phosphorylated YXXM motifs. In terms of processing, phosphorylation of Tyr-582 is required for grb2-binding.

In terms of biological role, may mediate the control of various cellular processes by insulin. When phosphorylated by the insulin receptor binds specifically to various cellular proteins containing SH2 domains such as phosphatidylinositol 3-kinase p85 subunit or grb2. Activates phosphatidylinositol 3-kinase when bound to the regulatory p85 subunit. The polypeptide is Insulin receptor substrate 1-A (irs1-a) (Xenopus laevis (African clawed frog)).